Here is a 62-residue protein sequence, read N- to C-terminus: Prokaryotic ubiquitin-like protein Pup 2 (62 aa).

The segment at 1-34 (MRQEKPKRHGREDDEPPEPAPAGRARDTTVGDDT) is disordered. Positions 21–56 (PAGRARDTTVGDDTDELLDEIDGVLEENAVEFVRSY) are ARC ATPase binding. An Isoglutamyl lysine isopeptide (Glu-Lys) (interchain with K-? in acceptor proteins) cross-link involves residue E62.

It belongs to the prokaryotic ubiquitin-like protein family. In terms of assembly, strongly interacts with the proteasome-associated ATPase ARC through a hydrophobic interface; the interacting region of Pup lies in its C-terminal half. There is one Pup binding site per ARC hexamer ring.

It participates in protein degradation; proteasomal Pup-dependent pathway. Functionally, protein modifier that is covalently attached to lysine residues of substrate proteins, thereby targeting them for proteasomal degradation. The tagging system is termed pupylation. This is Prokaryotic ubiquitin-like protein Pup 2 from Saccharopolyspora erythraea (strain ATCC 11635 / DSM 40517 / JCM 4748 / NBRC 13426 / NCIMB 8594 / NRRL 2338).